The primary structure comprises 198 residues: Glycerol-3-phosphate acyltransferase 1 (198 aa).

5 helical membrane-spanning segments follow: residues 5 to 25 (ALLALLLSYLIGAIPAAAWLA), 52 to 72 (GPALLVASFDILKGVLAVLLA), 81 to 101 (WAALCGVLAVIGHNFSPFLAF), 111 to 131 (FGVIAILDPVLGLTTFVLAIA), and 138 to 158 (FVSAGSIMGAFIAGALVLVLP).

The protein belongs to the PlsY family. As to quaternary structure, probably interacts with PlsX.

Its subcellular location is the cell membrane. The enzyme catalyses an acyl phosphate + sn-glycerol 3-phosphate = a 1-acyl-sn-glycero-3-phosphate + phosphate. Its pathway is lipid metabolism; phospholipid metabolism. Its function is as follows. Catalyzes the transfer of an acyl group from acyl-phosphate (acyl-PO(4)) to glycerol-3-phosphate (G3P) to form lysophosphatidic acid (LPA). This enzyme utilizes acyl-phosphate as fatty acyl donor, but not acyl-CoA or acyl-ACP. The chain is Glycerol-3-phosphate acyltransferase 1 from Deinococcus radiodurans (strain ATCC 13939 / DSM 20539 / JCM 16871 / CCUG 27074 / LMG 4051 / NBRC 15346 / NCIMB 9279 / VKM B-1422 / R1).